The sequence spans 175 residues: MSQALTLARPYGRAAFAIAREGGNFAPWSDALAFSAQVAGDPRVAALLLNPALGQEQAVTLLAPPQAGEDYLRFLGVLADAQRLSLLPEVAGLYEQLRAEAEHVVKATVTSAAAMSQTELDTIAAALKKRFGRDVDITTAVDASLIGGAVIDTGDVVIDGSLKGKLARLQSSLAH.

Belongs to the ATPase delta chain family. F-type ATPases have 2 components, F(1) - the catalytic core - and F(0) - the membrane proton channel. F(1) has five subunits: alpha(3), beta(3), gamma(1), delta(1), epsilon(1). F(0) has three main subunits: a(1), b(2) and c(10-14). The alpha and beta chains form an alternating ring which encloses part of the gamma chain. F(1) is attached to F(0) by a central stalk formed by the gamma and epsilon chains, while a peripheral stalk is formed by the delta and b chains.

Its subcellular location is the cell inner membrane. Its function is as follows. F(1)F(0) ATP synthase produces ATP from ADP in the presence of a proton or sodium gradient. F-type ATPases consist of two structural domains, F(1) containing the extramembraneous catalytic core and F(0) containing the membrane proton channel, linked together by a central stalk and a peripheral stalk. During catalysis, ATP synthesis in the catalytic domain of F(1) is coupled via a rotary mechanism of the central stalk subunits to proton translocation. In terms of biological role, this protein is part of the stalk that links CF(0) to CF(1). It either transmits conformational changes from CF(0) to CF(1) or is implicated in proton conduction. This chain is ATP synthase subunit delta, found in Xanthomonas euvesicatoria pv. vesicatoria (strain 85-10) (Xanthomonas campestris pv. vesicatoria).